The following is a 394-amino-acid chain: LL-diaminopimelate aminotransferase (394 aa).

The substrate site is built by Tyr14 and Gly41. Pyridoxal 5'-phosphate is bound by residues Tyr71, 104-105 (AK), Tyr128, Asn174, Tyr205, and 233-235 (SFS). Substrate-binding residues include Lys105, Tyr128, and Asn174. The residue at position 236 (Lys236) is an N6-(pyridoxal phosphate)lysine. Pyridoxal 5'-phosphate contacts are provided by Arg244 and Asn275. 2 residues coordinate substrate: Asn275 and Arg369.

The protein belongs to the class-I pyridoxal-phosphate-dependent aminotransferase family. LL-diaminopimelate aminotransferase subfamily. Homodimer. Pyridoxal 5'-phosphate serves as cofactor.

The enzyme catalyses (2S,6S)-2,6-diaminopimelate + 2-oxoglutarate = (S)-2,3,4,5-tetrahydrodipicolinate + L-glutamate + H2O + H(+). Its pathway is amino-acid biosynthesis; L-lysine biosynthesis via DAP pathway; LL-2,6-diaminopimelate from (S)-tetrahydrodipicolinate (aminotransferase route): step 1/1. Involved in the synthesis of meso-diaminopimelate (m-DAP or DL-DAP), required for both lysine and peptidoglycan biosynthesis. Catalyzes the direct conversion of tetrahydrodipicolinate to LL-diaminopimelate. Is also able to use meso-diaminopimelate, cystathionine, lysine or ornithine as substrates. The chain is LL-diaminopimelate aminotransferase from Chlamydia trachomatis serovar D (strain ATCC VR-885 / DSM 19411 / UW-3/Cx).